We begin with the raw amino-acid sequence, 154 residues long: MHCPFCNAPDTKVIDSRLATEGAQVRRRRECMSCAERFTTYETAELTLPRVIKSDGNRERFDDDKIRRGLIKALEKRPVASEAIDQVVNRIHKQLTAEGVREIPSSQIGELLMEALKELDQVAYVRFASVYRSFQDVNAFREEIEKLVKATKSQ.

The segment at 3 to 34 (CPFCNAPDTKVIDSRLATEGAQVRRRRECMSC) is a zinc-finger region. The 91-residue stretch at 49 to 139 (PRVIKSDGNR…VYRSFQDVNA (91 aa)) folds into the ATP-cone domain.

Belongs to the NrdR family. It depends on Zn(2+) as a cofactor.

In terms of biological role, negatively regulates transcription of bacterial ribonucleotide reductase nrd genes and operons by binding to NrdR-boxes. In Hydrogenovibrio crunogenus (strain DSM 25203 / XCL-2) (Thiomicrospira crunogena), this protein is Transcriptional repressor NrdR.